The primary structure comprises 598 residues: Beta-hexosaminidase A (598 aa).

A signal peptide spans 1–11 (MSFITSAHATA). Asp-305 is a catalytic residue.

The protein belongs to the glycosyl hydrolase 3 family.

The catalysed reaction is Hydrolysis of terminal non-reducing N-acetyl-D-hexosamine residues in N-acetyl-beta-D-hexosaminides.. Most active towards p-nitrophenyl-N-acetyl-beta-D-glucosaminide(PNP-beta-GlcNAc) and diacetylchitobiose. This Pseudoalteromonas piscicida protein is Beta-hexosaminidase A (cht60).